The chain runs to 70 residues: Sec-independent protein translocase protein TatA (70 aa).

Residues 1-21 (MFGLGGQELLLILLIILLLFG) form a helical membrane-spanning segment. The segment at 47–70 (EDEFNKAMSDPPEKKEKESPSDKG) is disordered. Residues 57 to 70 (PPEKKEKESPSDKG) are compositionally biased toward basic and acidic residues.

It belongs to the TatA/E family. As to quaternary structure, forms a complex with TatC.

The protein localises to the cell inner membrane. In terms of biological role, part of the twin-arginine translocation (Tat) system that transports large folded proteins containing a characteristic twin-arginine motif in their signal peptide across membranes. TatA could form the protein-conducting channel of the Tat system. The polypeptide is Sec-independent protein translocase protein TatA (Prosthecochloris aestuarii (strain DSM 271 / SK 413)).